We begin with the raw amino-acid sequence, 414 residues long: MSEYIRVTEDESDEPIEIPSEDDGTVLLSTVTAQFPGACGLRYRNPVSQCMRGVRLVEGILHAPDAGWGNLVYVVNYPKDNKRKMDETDASSAVKVKRAVQKTSDLIVLGLPWKTTEQDLKEYFSTFGEVLMVQVKKDLKTGHSKGFGFVRFTEYETQVKVMSQRHMIDGRWCDCKLPNSKQSQDEPLRSRKVFVGRCTEDMTEDELREFFSQYGDVMDVFIPKPFRAFAFVTFADDQIAQSLCGEDLIIKGISVHISNAEPKHNSNRQLERSGRFGGNPGGFGNQGGFGNSRGGGAGLGNNQGSNMGGGMNFGAFSINPAMMAAAQAALQSSWGMMGMLASQQNQSGPSGNNQNQGNMQREPNQAFGSGNNSYSGSNSGAAIGWGSASNAGSGSGFNGGFGSSMDSKSSGWGM.

Glycyl lysine isopeptide (Lys-Gly) (interchain with G-Cter in SUMO2) cross-links involve residues lysine 79, lysine 84, lysine 95, lysine 102, and lysine 181. 2 RRM domains span residues serine 104–glutamate 200 and arginine 191–proline 262. Serine 183 carries the post-translational modification Phosphoserine. The segment at aspartate 216–methionine 414 is interaction with UBQLN2. Residues glutamate 261–glycine 274 are compositionally biased toward basic and acidic residues. Disordered stretches follow at residues glutamate 261–glutamine 303 and alanine 341–serine 373. Residue lysine 263 forms a Glycyl lysine isopeptide (Lys-Gly) (interchain with G-Cter in SUMO2) linkage. The segment covering arginine 275–glutamine 303 has biased composition (gly residues). Serine 292 is modified (phosphoserine). Omega-N-methylarginine is present on arginine 293. The span at serine 342 to asparagine 358 shows a compositional bias: low complexity.

Monomer and component of the SFPQ-NONO complex, which is probably a heterotetramer of two 52 kDa (NONO) and two 100 kDa (SFPQ) subunits. NONO is a component of spliceosome and U5.4/6 snRNP complexes. Interacts with CPNE4 (via VWFA domain). Forms heterodimers with PSPC1; this involves formation of a coiled coil domain by helices from both proteins. Part of complex consisting of SFPQ, NONO and MATR3. Part of a complex consisting of SFPQ, NONO and NR5A1. Part of a complex consisting of SFPQ, NONO and TOP1. Interacts with SPI1. Interacts with RNF43. Interacts with PER1 and PER2. Part of the HDP-RNP complex composed of at least HEXIM1, PRKDC, XRCC5, XRCC6, paraspeckle proteins (SFPQ, NONO, PSPC1, RBM14, and MATR3) and NEAT1 RNA. Interacts (via second RRM domain) with WASL; the interaction is direct. Component of a multiprotein complex with WASL and SFPQ. Interacts with ERCC6. Interacts (via DNA-binding domain) with TET1. Hyperphosphorylated. Post-translationally, ubiquitinated.

It localises to the nucleus. It is found in the nucleolus. The protein resides in the nucleus speckle. Its subcellular location is the chromosome. The protein localises to the mitochondrion. In terms of biological role, DNA- and RNA binding protein, involved in several nuclear processes. Binds the conventional octamer sequence in double-stranded DNA. Also binds single-stranded DNA and RNA at a site independent of the duplex site. Involved in pre-mRNA splicing, probably as a heterodimer with SFPQ. Interacts with U5 snRNA, probably by binding to a purine-rich sequence located on the 3' side of U5 snRNA stem 1b. Together with PSPC1, required for the formation of nuclear paraspeckles. The SFPQ-NONO heteromer associated with MATR3 may play a role in nuclear retention of defective RNAs. The SFPQ-NONO heteromer may be involved in DNA unwinding by modulating the function of topoisomerase I/TOP1. The SFPQ-NONO heteromer may be involved in DNA non-homologous end joining (NHEJ) required for double-strand break repair and V(D)J recombination and may stabilize paired DNA ends. In vitro, the complex strongly stimulates DNA end joining, binds directly to the DNA substrates and cooperates with the Ku70/G22P1-Ku80/XRCC5 (Ku) dimer to establish a functional preligation complex. NONO is involved in transcriptional regulation. The SFPQ-NONO-NR5A1 complex binds to the CYP17 promoter and regulates basal and cAMP-dependent transcriptional activity. NONO binds to an enhancer element in long terminal repeats of endogenous intracisternal A particles (IAPs) and activates transcription. Regulates the circadian clock by repressing the transcriptional activator activity of the CLOCK-BMAL1 heterodimer. Important for the functional organization of GABAergic synapses. Plays a specific and important role in the regulation of synaptic RNAs and GPHN/gephyrin scaffold structure, through the regulation of GABRA2 transcript. Plays a key role during neuronal differentiation by recruiting TET1 to genomic loci and thereby regulating 5-hydroxymethylcytosine levels. Plays a role in the regulation of DNA virus-mediated innate immune response by assembling into the HDP-RNP complex, a complex that serves as a platform for IRF3 phosphorylation and subsequent innate immune response activation through the cGAS-STING pathway. The protein is TAR DNA-binding protein 43 (TARDBP) of Pongo abelii (Sumatran orangutan).